The following is a 575-amino-acid chain: Bifunctional decalin synthase calF (575 aa).

A signal peptide spans 1–18; that stretch reads MSFKPLLLSLSLLSPALG. N-linked (GlcNAc...) asparagine glycans are attached at residues Asn46, Asn103, Asn127, Asn175, Asn268, Asn308, Asn359, Asn425, and Asn485. The FAD-binding PCMH-type domain maps to 118-297; that stretch reads LGNYASYSIN…LSMTTKVFQD (180 aa).

It belongs to the oxygen-dependent FAD-linked oxidoreductase family.

It functions in the pathway secondary metabolite biosynthesis. Its function is as follows. Bifunctional decaline synthase; part of the gene cluster that mediates the biosynthesis of calbistrin A and related compounds. Calbistrin A is a secondary metabolite with an interesting structure that was recently found to have bioactivity against leukemia cells. It consists of two polyketides linked by an ester bond: a bicyclic decalin containing polyketide and a linear 12 carbon dioic acid structure. The polyketide synthase calA is probably responsible for forming the decalin moiety. Because calA lacks a designated enoylreductase (ER) domain, the required activity is provided by the trans-enoyl reductase calK. Following release from the PKS, calF then probably catalyzes the oxidation and the subsequent Diels Alder cycloisomerization that lead to the formation of the decalin moiety. The decalin polyketide backbone includes two C-methyl groups, at C7 and C11 in backbone, of which the C7 position is probably methylated by the methyltransferase domain of calA. A candidate for adding the methyl group at C11, if not done by CalA, is the cluster methyltransferase calH. Several additional tailoring enzymes within the cluster could be involved in the modification of the decalin polyketide product. Those include the 3 cytochrome P450 monooxygenases CalE, CalG and CalL, of which one might be responsible for the introduction of the extra hydroxyl group attached to the backbone of the decalin moiety, at position C9 in the backbone, that allows for attachment of the linear moiety. One tailoring enzyme activity that is expected to be involved in biosynthesis of calbistrin is an acyltransferase for connecting the two polyketide synthase products, and which could be performed by the cluster acyltransferase calJ. The enzyme responsible for the biosynthesis of the linear moiety, probably a second PKS, has not been identified yet. The sequence is that of Bifunctional decalin synthase calF from Penicillium decumbens.